The sequence spans 162 residues: UPF0178 protein RSKD131_2223 (162 aa).

Belongs to the UPF0178 family.

The sequence is that of UPF0178 protein RSKD131_2223 from Cereibacter sphaeroides (strain KD131 / KCTC 12085) (Rhodobacter sphaeroides).